Here is a 360-residue protein sequence, read N- to C-terminus: SVP1-like protein 2 (360 aa).

WD repeat units follow at residues 12 to 50, 191 to 231, and 236 to 275; these read AHEP…LRMK, AHKS…LRFE, and LDRA…PQPE.

The protein belongs to the WD repeat PROPPIN family.

It localises to the vacuole membrane. It is found in the cytoplasmic vesicle membrane. Involved in mitochondrial or peroxisomal functions and amino acid signaling pathways. This Pichia angusta (Yeast) protein is SVP1-like protein 2 (HSV2).